Reading from the N-terminus, the 396-residue chain is Elongation factor Tu (396 aa).

Residues 10–206 (KPHVNVGTIG…ALDSYIPEPV (197 aa)) form the tr-type G domain. Positions 19–26 (GHIDHGKT) are G1. 19–26 (GHIDHGKT) is a binding site for GTP. Threonine 26 contacts Mg(2+). The segment at 60–64 (TKTVT) is G2. A G3 region spans residues 83–86 (DCPG). GTP contacts are provided by residues 83–87 (DCPGH) and 138–141 (NKCD). The interval 138–141 (NKCD) is G4. Positions 176-178 (ASL) are G5.

This sequence belongs to the TRAFAC class translation factor GTPase superfamily. Classic translation factor GTPase family. EF-Tu/EF-1A subfamily. Monomer.

It is found in the cytoplasm. It catalyses the reaction GTP + H2O = GDP + phosphate + H(+). Functionally, GTP hydrolase that promotes the GTP-dependent binding of aminoacyl-tRNA to the A-site of ribosomes during protein biosynthesis. This chain is Elongation factor Tu, found in Sorangium cellulosum (strain So ce56) (Polyangium cellulosum (strain So ce56)).